Reading from the N-terminus, the 669-residue chain is DNA ligase (669 aa).

35-39 (DFEYD) lines the NAD(+) pocket. A disordered region spans residues 52 to 71 (YPEWDSPDSPTHRVGSDKTE). A compositionally biased stretch (basic and acidic residues) spans 61-71 (PTHRVGSDKTE). Residues 84–85 (SL) and Glu-115 contribute to the NAD(+) site. Residue Lys-117 is the N6-AMP-lysine intermediate of the active site. Residues Arg-138, Glu-175, Lys-290, and Lys-314 each contribute to the NAD(+) site. Residues Cys-408, Cys-411, Cys-426, and Cys-432 each contribute to the Zn(2+) site. The BRCT domain maps to 590-669 (AVSNRLAGKT…EEEFLRLIEE (80 aa)).

It belongs to the NAD-dependent DNA ligase family. LigA subfamily. The cofactor is Mg(2+). Mn(2+) is required as a cofactor.

The enzyme catalyses NAD(+) + (deoxyribonucleotide)n-3'-hydroxyl + 5'-phospho-(deoxyribonucleotide)m = (deoxyribonucleotide)n+m + AMP + beta-nicotinamide D-nucleotide.. Functionally, DNA ligase that catalyzes the formation of phosphodiester linkages between 5'-phosphoryl and 3'-hydroxyl groups in double-stranded DNA using NAD as a coenzyme and as the energy source for the reaction. It is essential for DNA replication and repair of damaged DNA. This Porphyromonas gingivalis (strain ATCC BAA-308 / W83) protein is DNA ligase.